The primary structure comprises 337 residues: MPIRLGINGFGRIGRMALRASLNIDGVQVVAINDPFTDCEYMEYMLKYDTVHGRFDGTIAHSEDSITVNGNKISVFKSMKPEEIPWGKTQVDIVLECTGRFTTKKDAELHITGGCKRVIISAPSADAPMFVCGCNLETYDPSTMKVISNASCTTNCLAPLAMVVNKKFGIKEGLMTTVHAVTATQLPVDGPSKKDWRGGRSCGANVIPSSTGAAKAVGKVLPALNGKLTGMAFRVPVPDVSVVDLTCTLEKDATYDEICAEIKRGSENELKGIMTYTNEDVVSSDFLSTTSTCNFDSKAGIMLNSRFVKLVAWYDNEFGYANKLVELAKYVGSKGCQ.

Residues 12 to 13 (RI), aspartate 34, and methionine 79 each bind NAD(+). D-glyceraldehyde 3-phosphate contacts are provided by residues 151-153 (SCT), threonine 182, 211-212 (TG), and arginine 234. Cysteine 152 (nucleophile) is an active-site residue. Asparagine 316 provides a ligand contact to NAD(+).

The protein belongs to the glyceraldehyde-3-phosphate dehydrogenase family. In terms of assembly, homotetramer.

It localises to the cytoplasm. It carries out the reaction D-glyceraldehyde 3-phosphate + phosphate + NAD(+) = (2R)-3-phospho-glyceroyl phosphate + NADH + H(+). Its pathway is carbohydrate degradation; glycolysis; pyruvate from D-glyceraldehyde 3-phosphate: step 1/5. This Giardia intestinalis (Giardia lamblia) protein is Glyceraldehyde-3-phosphate dehydrogenase 1 (GAP1).